Reading from the N-terminus, the 580-residue chain is Putative ankyrin repeat protein L63 (580 aa).

ANK repeat units follow at residues 81–110 (SLNR…DFRI), 111–140 (DNDY…NIGA), 141–170 (NDNC…DINA), 172–200 (NNYP…DIRA), 202–230 (DDYV…VLNK), 314–339 (SLDD…LLGA), 340–369 (SERK…NIKC), 370–399 (GSNC…DINS), 400–429 (GNNY…NIRA), 431–459 (NDRA…NIRA), 461–489 (DDRA…DIKA), 490–519 (GDDY…NIKA), 521–549 (DDYA…DIRA), and 551–579 (NNYA…VINP).

This Acanthamoeba polyphaga (Amoeba) protein is Putative ankyrin repeat protein L63.